The chain runs to 93 residues: Small ribosomal subunit protein uS19 (93 aa).

The protein belongs to the universal ribosomal protein uS19 family.

Functionally, protein S19 forms a complex with S13 that binds strongly to the 16S ribosomal RNA. The polypeptide is Small ribosomal subunit protein uS19 (Karelsulcia muelleri (strain GWSS) (Sulcia muelleri)).